The chain runs to 357 residues: Probable cinnamyl alcohol dehydrogenase (357 aa).

A Zn(2+)-binding site is contributed by Cys47. Thr49 is a binding site for NADP(+). Positions 69, 70, 100, 103, 106, 114, and 163 each coordinate Zn(2+). NADP(+)-binding positions include Thr167, 188-193 (GLGGVG), 211-216 (SSSDKK), Thr251, Gly275, and 298-300 (SFI).

This sequence belongs to the zinc-containing alcohol dehydrogenase family. In terms of assembly, homodimer. The cofactor is Zn(2+).

It catalyses the reaction (E)-cinnamyl alcohol + NADP(+) = (E)-cinnamaldehyde + NADPH + H(+). The catalysed reaction is (E)-coniferol + NADP(+) = (E)-coniferaldehyde + NADPH + H(+). The enzyme catalyses (E)-sinapyl alcohol + NADP(+) = (E)-sinapaldehyde + NADPH + H(+). It carries out the reaction (E)-4-coumaroyl alcohol + NADP(+) = (E)-4-coumaraldehyde + NADPH + H(+). It catalyses the reaction (E)-caffeyl alcohol + NADP(+) = (E)-caffeyl aldehyde + NADPH + H(+). Its pathway is aromatic compound metabolism; phenylpropanoid biosynthesis. In terms of biological role, involved in lignin biosynthesis. Catalyzes the final step specific for the production of lignin monomers. Catalyzes the NADPH-dependent reduction of coniferaldehyde, 5-hydroxyconiferaldehyde, sinapaldehyde, 4-coumaraldehyde and caffeyl aldehyde to their respective alcohols. In Populus deltoides (Eastern poplar), this protein is Probable cinnamyl alcohol dehydrogenase.